The primary structure comprises 549 residues: Glucose-6-phosphate isomerase (549 aa).

The active-site Proton donor is Glu-355. Active-site residues include His-387 and Lys-515.

Belongs to the GPI family.

The protein resides in the cytoplasm. It catalyses the reaction alpha-D-glucose 6-phosphate = beta-D-fructose 6-phosphate. It participates in carbohydrate biosynthesis; gluconeogenesis. The protein operates within carbohydrate degradation; glycolysis; D-glyceraldehyde 3-phosphate and glycerone phosphate from D-glucose: step 2/4. Its function is as follows. Catalyzes the reversible isomerization of glucose-6-phosphate to fructose-6-phosphate. This Haemophilus influenzae (strain ATCC 51907 / DSM 11121 / KW20 / Rd) protein is Glucose-6-phosphate isomerase.